The sequence spans 270 residues: L-fucose dehydrogenase (270 aa).

NAD(+) is bound by residues R19, I21, D40, K41, D62, V63, N89, Y154, K158, I187, T189, and L191. The active-site Proton acceptor is Y154.

It belongs to the short-chain dehydrogenases/reductases (SDR) family. In terms of assembly, homotetramer. In terms of tissue distribution, detected in retina.

It localises to the cytoplasm. The enzyme catalyses L-fucose + NAD(+) = L-fucono-1,5-lactone + NADH + H(+). The catalysed reaction is D-arabinose + NAD(+) = D-arabinono-1,5-lactone + NADH + H(+). It carries out the reaction L-galactose + NAD(+) = L-galactono-1,5-lactone + NADH + H(+). It functions in the pathway carbohydrate degradation; L-fucose degradation. In terms of biological role, catalyzes the NAD(+)-dependent oxidation of L-fucose, yielding L-fucono-1,5-lactone, which rapidly converts spontaneously to L-fucone-1,4-lactone. Can also act on D-arabinose and L-galactose, with lower catalytic efficiency. Does not use NADPH. May be the initial enzyme of the putative L-fucose degradation pathway in mammals. The chain is L-fucose dehydrogenase (HSD17B14) from Bos taurus (Bovine).